Here is a 132-residue protein sequence, read N- to C-terminus: Small ribosomal subunit protein uS8 (132 aa).

It belongs to the universal ribosomal protein uS8 family. As to quaternary structure, part of the 30S ribosomal subunit. Contacts proteins S5 and S12.

In terms of biological role, one of the primary rRNA binding proteins, it binds directly to 16S rRNA central domain where it helps coordinate assembly of the platform of the 30S subunit. This Geobacter sulfurreducens (strain ATCC 51573 / DSM 12127 / PCA) protein is Small ribosomal subunit protein uS8.